The following is a 504-amino-acid chain: Ammonium transporter 1 member 4 (504 aa).

12 helical membrane passes run 12-32, 55-75, 90-110, 136-156, 161-181, 207-227, 251-271, 292-314, 318-338, 344-364, 377-397, and 430-450; these read LIPL…AEYI, LLFS…LCAG, VIDA…FAFG, YFLY…GSIA, FVAY…IVSH, FAGS…GALI, LVVL…PGSF, AVGR…TLFG, IDGY…FAAI, VVEP…LMGC, LEAA…TGLF, and VVQI…LFFI. Phosphothreonine is present on threonine 471.

This sequence belongs to the ammonia transporter channel (TC 1.A.11.2) family. Specifically expressed in pollen grains and tubes.

Its subcellular location is the cell membrane. In terms of biological role, high affinity ammonium transporter in the plasma membrane. This is Ammonium transporter 1 member 4 (AMT1-4) from Arabidopsis thaliana (Mouse-ear cress).